A 328-amino-acid polypeptide reads, in one-letter code: Phosphate acyltransferase (328 aa).

This sequence belongs to the PlsX family. As to quaternary structure, homodimer. Probably interacts with PlsY.

The protein resides in the cytoplasm. The catalysed reaction is a fatty acyl-[ACP] + phosphate = an acyl phosphate + holo-[ACP]. It functions in the pathway lipid metabolism; phospholipid metabolism. In terms of biological role, catalyzes the reversible formation of acyl-phosphate (acyl-PO(4)) from acyl-[acyl-carrier-protein] (acyl-ACP). This enzyme utilizes acyl-ACP as fatty acyl donor, but not acyl-CoA. This Campylobacter jejuni (strain RM1221) protein is Phosphate acyltransferase.